The following is a 421-amino-acid chain: UDP-N-acetylglucosamine 1-carboxyvinyltransferase (421 aa).

22–23 (KN) contributes to the phosphoenolpyruvate binding site. Position 94 (R94) interacts with UDP-N-acetyl-alpha-D-glucosamine. Residue C118 is the Proton donor of the active site. 2-(S-cysteinyl)pyruvic acid O-phosphothioketal is present on C118. UDP-N-acetyl-alpha-D-glucosamine is bound by residues 163 to 166 (KVSV), D308, and I330.

It belongs to the EPSP synthase family. MurA subfamily.

Its subcellular location is the cytoplasm. The catalysed reaction is phosphoenolpyruvate + UDP-N-acetyl-alpha-D-glucosamine = UDP-N-acetyl-3-O-(1-carboxyvinyl)-alpha-D-glucosamine + phosphate. It functions in the pathway cell wall biogenesis; peptidoglycan biosynthesis. Its function is as follows. Cell wall formation. Adds enolpyruvyl to UDP-N-acetylglucosamine. The sequence is that of UDP-N-acetylglucosamine 1-carboxyvinyltransferase from Orientia tsutsugamushi (strain Boryong) (Rickettsia tsutsugamushi).